The sequence spans 424 residues: Glucose-1-phosphate adenylyltransferase (424 aa).

Residues Y112, G177, E192–K193, and S210 contribute to the alpha-D-glucose 1-phosphate site.

It belongs to the bacterial/plant glucose-1-phosphate adenylyltransferase family. In terms of assembly, homotetramer.

It carries out the reaction alpha-D-glucose 1-phosphate + ATP + H(+) = ADP-alpha-D-glucose + diphosphate. It participates in glycan biosynthesis; glycogen biosynthesis. Functionally, involved in the biosynthesis of ADP-glucose, a building block required for the elongation reactions to produce glycogen. Catalyzes the reaction between ATP and alpha-D-glucose 1-phosphate (G1P) to produce pyrophosphate and ADP-Glc. The sequence is that of Glucose-1-phosphate adenylyltransferase from Methylococcus capsulatus (strain ATCC 33009 / NCIMB 11132 / Bath).